The following is a 264-amino-acid chain: Thymidylate synthase (264 aa).

R21 provides a ligand contact to dUMP. H51 contacts (6R)-5,10-methylene-5,6,7,8-tetrahydrofolate. 126–127 is a dUMP binding site; sequence RR. C146 serves as the catalytic Nucleophile. Residues 166–169, N177, and 207–209 contribute to the dUMP site; these read RSAD and HLY. Position 169 (D169) interacts with (6R)-5,10-methylene-5,6,7,8-tetrahydrofolate. Position 263 (A263) interacts with (6R)-5,10-methylene-5,6,7,8-tetrahydrofolate.

Belongs to the thymidylate synthase family. Bacterial-type ThyA subfamily. Homodimer.

It is found in the cytoplasm. It carries out the reaction dUMP + (6R)-5,10-methylene-5,6,7,8-tetrahydrofolate = 7,8-dihydrofolate + dTMP. It functions in the pathway pyrimidine metabolism; dTTP biosynthesis. Functionally, catalyzes the reductive methylation of 2'-deoxyuridine-5'-monophosphate (dUMP) to 2'-deoxythymidine-5'-monophosphate (dTMP) while utilizing 5,10-methylenetetrahydrofolate (mTHF) as the methyl donor and reductant in the reaction, yielding dihydrofolate (DHF) as a by-product. This enzymatic reaction provides an intracellular de novo source of dTMP, an essential precursor for DNA biosynthesis. The sequence is that of Thymidylate synthase from Legionella pneumophila (strain Lens).